The following is a 135-amino-acid chain: Phosphoinositide-interacting protein (135 aa).

Residues 1 to 21 are disordered; it reads MEVLPKALEVDERSPESKDLL. The span at 8 to 19 shows a compositional bias: basic and acidic residues; the sequence is LEVDERSPESKD. The next 2 membrane-spanning stretches (helical) occupy residues 54-74 and 92-112; these read IIIM…TCVA and PAFL…VPII.

As to quaternary structure, interacts with TRPV1. Strongly expressed in most dorsal root ganglia (DRG) and trigeminal neurons. Expressed by most peptidergic (CGRP+) and non-peptidergic (IB4+) DRG neurons. Weakly expressed in other parts of the peripheral nervous system (PNS) including sympathetic and enteric neurons. Not expressed in the spinal cord.

It is found in the membrane. In terms of biological role, regulatory subunit of TRPV1, a molecular sensor of noxious heat and capsaicin. Positively regulates TRPV1 channel activity via phosphatidylinositol 4,5-bisphosphate (PIP2). Binds various phosphoinositide, including phosphatidylinositol 4,5-bisphosphate (PIP2), but not phosphatidylinositol (PI). This Mus musculus (Mouse) protein is Phosphoinositide-interacting protein (Pirt).